We begin with the raw amino-acid sequence, 503 residues long: Maturase K (503 aa).

Belongs to the intron maturase 2 family. MatK subfamily.

It localises to the plastid. The protein resides in the chloroplast. In terms of biological role, usually encoded in the trnK tRNA gene intron. Probably assists in splicing its own and other chloroplast group II introns. This Rhamnus cathartica (Common buckthorn) protein is Maturase K.